A 318-amino-acid polypeptide reads, in one-letter code: NADH-ubiquinone oxidoreductase chain 1 (318 aa).

A run of 8 helical transmembrane segments spans residues 2 to 22 (PVIN…FLML), 69 to 89 (ILYI…WTPL), 100 to 120 (LGLL…LWSG), 146 to 166 (LALI…STLI), 171 to 191 (HSWL…STLA), 222 to 242 (LFFM…AMIF), 253 to 273 (ELHT…FLWI), and 294 to 314 (LPLT…TSGI).

Belongs to the complex I subunit 1 family. As to quaternary structure, core subunit of respiratory chain NADH dehydrogenase (Complex I) which is composed of 45 different subunits.

It localises to the mitochondrion inner membrane. It catalyses the reaction a ubiquinone + NADH + 5 H(+)(in) = a ubiquinol + NAD(+) + 4 H(+)(out). Core subunit of the mitochondrial membrane respiratory chain NADH dehydrogenase (Complex I) which catalyzes electron transfer from NADH through the respiratory chain, using ubiquinone as an electron acceptor. Essential for the catalytic activity and assembly of complex I. The sequence is that of NADH-ubiquinone oxidoreductase chain 1 (MT-ND1) from Pongo pygmaeus (Bornean orangutan).